The primary structure comprises 876 residues: Leucine--tRNA ligase (876 aa).

The 'HIGH' region motif lies at 43 to 53 (PYPSGRIHMGH). A 'KMSKS' region motif is present at residues 632 to 636 (KMSKS). Position 635 (Lys-635) interacts with ATP.

The protein belongs to the class-I aminoacyl-tRNA synthetase family.

The protein localises to the cytoplasm. It catalyses the reaction tRNA(Leu) + L-leucine + ATP = L-leucyl-tRNA(Leu) + AMP + diphosphate. This Rhodopseudomonas palustris (strain TIE-1) protein is Leucine--tRNA ligase.